The chain runs to 143 residues: Anti-sigma F factor (143 aa).

Belongs to the anti-sigma-factor family.

The enzyme catalyses L-seryl-[protein] + ATP = O-phospho-L-seryl-[protein] + ADP + H(+). It carries out the reaction L-threonyl-[protein] + ATP = O-phospho-L-threonyl-[protein] + ADP + H(+). Functionally, binds to sigma F and blocks its ability to form an RNA polymerase holoenzyme (E-sigma F). Phosphorylates SpoIIAA on a serine residue. This phosphorylation may enable SpoIIAA to act as an anti-anti-sigma factor that counteracts SpoIIAB and thus releases sigma F from inhibition. The sequence is that of Anti-sigma F factor from Clostridium botulinum (strain Alaska E43 / Type E3).